Consider the following 536-residue polypeptide: Apolipoprotein N-acyltransferase (536 aa).

The next 6 membrane-spanning stretches (helical) occupy residues 34–54, 64–84, 89–109, 129–149, 172–192, and 199–219; these read PLWWLQLASMAMLAWLLRPGA, ALIGGVFATAWLASTFWWLFI, YGALPAPLAAAAVLVLAAFLA, GAALLFGACWLLAELARGSLW, YVGVYGIGAVAALLALLCVQW, and HWPMWLLLLAGAAALALAAVQ. Residues 244-487 enclose the CN hydrolase domain; the sequence is LQGNIAQDEK…RGVLRGQVHG (244 aa). Glutamate 283 functions as the Proton acceptor in the catalytic mechanism. Lysine 345 is an active-site residue. Cysteine 395 acts as the Nucleophile in catalysis. The helical transmembrane segment at 503 to 523 threads the bilayer; it reads WWVARWGLWPLWALAALALAW.

The protein belongs to the CN hydrolase family. Apolipoprotein N-acyltransferase subfamily.

The protein localises to the cell inner membrane. The catalysed reaction is N-terminal S-1,2-diacyl-sn-glyceryl-L-cysteinyl-[lipoprotein] + a glycerophospholipid = N-acyl-S-1,2-diacyl-sn-glyceryl-L-cysteinyl-[lipoprotein] + a 2-acyl-sn-glycero-3-phospholipid + H(+). It participates in protein modification; lipoprotein biosynthesis (N-acyl transfer). In terms of biological role, catalyzes the phospholipid dependent N-acylation of the N-terminal cysteine of apolipoprotein, the last step in lipoprotein maturation. The polypeptide is Apolipoprotein N-acyltransferase (Verminephrobacter eiseniae (strain EF01-2)).